We begin with the raw amino-acid sequence, 312 residues long: Putative HTH-type transcriptional regulatory protein Ta1363 (312 aa).

Residues 133–186 (LREMRMKMSLSIGYLSHYLGVSRRSVSLYENGSSATIDVFLKLQEIIKSDLVDH) form the HTH cro/C1-type domain. Residues 144–163 (IGYLSHYLGVSRRSVSLYEN) constitute a DNA-binding region (H-T-H motif).

The sequence is that of Putative HTH-type transcriptional regulatory protein Ta1363 from Thermoplasma acidophilum (strain ATCC 25905 / DSM 1728 / JCM 9062 / NBRC 15155 / AMRC-C165).